A 357-amino-acid polypeptide reads, in one-letter code: MSQSGKNGLTYSDAGVDIDAGNLLVQKIKPAVRSTRRPGADGEIGGFGGLFDLKAAGFADPVLVAANDGVGTKLKIAIDADYHDTVGIDLVAMCVNDLVVQGAEPLFFLDYFATGKLDPDQGAAIVGGIAAGCRQAGCALIGGETAEMPGMYSSGDYDLAGFAVGAAERGKLLPSGDIAEGDVILGLASSGVHSNGFSLVRKIVELSGLGWDAPAPFAEGRKLGEALLEPTRIYVKPLLKAIRETGALKALAHITGGGFPENIPRVLPKHLAAEIDLAAVKVPPVFSWLARTGGVEAKEMLRTFNCGIGMIVVVAEENVAAVSQALEAEGEKVVTLGRMIARAEGAAGTVYKGTLAI.

It belongs to the AIR synthase family.

Its subcellular location is the cytoplasm. The catalysed reaction is 2-formamido-N(1)-(5-O-phospho-beta-D-ribosyl)acetamidine + ATP = 5-amino-1-(5-phospho-beta-D-ribosyl)imidazole + ADP + phosphate + H(+). The protein operates within purine metabolism; IMP biosynthesis via de novo pathway; 5-amino-1-(5-phospho-D-ribosyl)imidazole from N(2)-formyl-N(1)-(5-phospho-D-ribosyl)glycinamide: step 2/2. The polypeptide is Phosphoribosylformylglycinamidine cyclo-ligase (Rhizobium etli (strain CIAT 652)).